Here is a 307-residue protein sequence, read N- to C-terminus: Nicotinamide/nicotinic acid mononucleotide adenylyltransferase 2 (307 aa).

Residues Ser16 and Phe17 each contribute to the NAD(+) site. Residue His24 participates in ATP binding. Residues Trp92 and Thr95 each contribute to the NAD(+) site. S-palmitoyl cysteine attachment occurs at residues Cys164 and Cys165. Positions 200, 202, 212, 213, and 232 each coordinate NAD(+). An ATP-binding site is contributed by 271-274; the sequence is TKSR.

This sequence belongs to the eukaryotic NMN adenylyltransferase family. Monomer. Requires Mg(2+) as cofactor. Post-translationally, degraded in response to injured neurite. Degradation is caused by polyubiquitination by MYCBP2 after recognition by FBXO45. Palmitoylated; palmitoylation is required for membrane association. Expressed predominantly in the brain and nervous system.

It is found in the golgi apparatus membrane. The protein resides in the cytoplasmic vesicle membrane. Its subcellular location is the cytoplasm. The protein localises to the cell projection. It localises to the axon. It catalyses the reaction beta-nicotinamide D-ribonucleotide + ATP + H(+) = diphosphate + NAD(+). The catalysed reaction is nicotinate beta-D-ribonucleotide + ATP + H(+) = deamido-NAD(+) + diphosphate. Its pathway is cofactor biosynthesis; NAD(+) biosynthesis; NAD(+) from nicotinamide D-ribonucleotide: step 1/1. It participates in cofactor biosynthesis; NAD(+) biosynthesis; deamido-NAD(+) from nicotinate D-ribonucleotide: step 1/1. Inhibited by P1-(adenosine-5')-P3-(nicotinamide-riboside-5')-triphosphate (Np3AD) and P1-(adenosine-5')-P4-(nicotinamide-riboside-5')-tetraphosphate (Np4AD). In terms of biological role, nicotinamide/nicotinate-nucleotide adenylyltransferase that acts as an axon maintenance factor. Axon survival factor required for the maintenance of healthy axons: acts by delaying Wallerian axon degeneration, an evolutionarily conserved process that drives the loss of damaged axons. Catalyzes the formation of NAD(+) from nicotinamide mononucleotide (NMN) and ATP. Can also use the deamidated form; nicotinic acid mononucleotide (NaMN) as substrate but with a lower efficiency. Cannot use triazofurin monophosphate (TrMP) as substrate. Also catalyzes the reverse reaction, i.e. the pyrophosphorolytic cleavage of NAD(+). For the pyrophosphorolytic activity prefers NAD(+), NADH and NaAD as substrates and degrades nicotinic acid adenine dinucleotide phosphate (NHD) less effectively. Fails to cleave phosphorylated dinucleotides NADP(+), NADPH and NaADP(+). Also acts as an activator of ADP-ribosylation by supporting the catalytic activity of PARP16 and promoting mono-ADP-ribosylation of ribosomes by PARP16. May be involved in the maintenance of axonal integrity. This is Nicotinamide/nicotinic acid mononucleotide adenylyltransferase 2 from Mus musculus (Mouse).